A 231-amino-acid polypeptide reads, in one-letter code: 5'-methylthioadenosine/S-adenosylhomocysteine nucleosidase (231 aa).

Glutamate 12 (proton acceptor) is an active-site residue. Residues glycine 78, valine 153, and 174–175 contribute to the substrate site; that span reads ME. Aspartate 198 serves as the catalytic Proton donor.

It belongs to the PNP/UDP phosphorylase family. MtnN subfamily.

The enzyme catalyses S-adenosyl-L-homocysteine + H2O = S-(5-deoxy-D-ribos-5-yl)-L-homocysteine + adenine. It catalyses the reaction S-methyl-5'-thioadenosine + H2O = 5-(methylsulfanyl)-D-ribose + adenine. The catalysed reaction is 5'-deoxyadenosine + H2O = 5-deoxy-D-ribose + adenine. The protein operates within amino-acid biosynthesis; L-methionine biosynthesis via salvage pathway; S-methyl-5-thio-alpha-D-ribose 1-phosphate from S-methyl-5'-thioadenosine (hydrolase route): step 1/2. Its function is as follows. Catalyzes the irreversible cleavage of the glycosidic bond in both 5'-methylthioadenosine (MTA) and S-adenosylhomocysteine (SAH/AdoHcy) to adenine and the corresponding thioribose, 5'-methylthioribose and S-ribosylhomocysteine, respectively. Also cleaves 5'-deoxyadenosine, a toxic by-product of radical S-adenosylmethionine (SAM) enzymes, into 5-deoxyribose and adenine. This is 5'-methylthioadenosine/S-adenosylhomocysteine nucleosidase from Vibrio vulnificus (strain YJ016).